A 616-amino-acid polypeptide reads, in one-letter code: Glycogenin-1 (616 aa).

Leucine 10, tyrosine 16, and arginine 95 together coordinate UDP. UDP-alpha-D-glucose contacts are provided by leucine 10, tyrosine 16, arginine 95, lysine 104, aspartate 120, aspartate 122, asparagine 158, serine 159, aspartate 185, aspartate 188, and glutamine 189. Aspartate 120 and aspartate 122 together coordinate UDP. Mn(2+) contacts are provided by aspartate 120 and aspartate 122. O-linked (Glc...) tyrosine glycosylation occurs at tyrosine 230. UDP contacts are provided by histidine 247, glycine 250, and lysine 253. Histidine 247 is a Mn(2+) binding site. Positions 250 and 253 each coordinate UDP-alpha-D-glucose. Basic and acidic residues predominate over residues 283-302; the sequence is HQLNNEVSKPKISDSDKTET. Disordered stretches follow at residues 283-320, 335-354, 371-525, and 553-588; these read HQLN…PTTN, NQNA…NPVP, TNQP…EKDK, and RDAT…EMPN. A compositionally biased stretch (basic and acidic residues) spans 377-386; that stretch reads ESREYSKEND. The segment covering 400-419 has biased composition (polar residues); it reads SPPNSTQELNSSYSVVSTQA. Low complexity predominate over residues 450-461; that stretch reads STAASSNNNVSN. 2 stretches are compositionally biased toward polar residues: residues 462–485 and 492–503; these read QPDG…PSNP and DNIQKPSVSTND. Residues 567 to 576 show a composition bias toward basic and acidic residues; sequence DKQEDMKLTA. Positions 577-586 are enriched in polar residues; it reads EETNQPQQEM. O-linked (Glc...) tyrosine glycosylation is present at tyrosine 598.

Belongs to the glycosyltransferase 8 family. Glycogenin subfamily. Mn(2+) is required as a cofactor.

It localises to the cytoplasm. Its subcellular location is the vacuole. The catalysed reaction is L-tyrosyl-[glycogenin] + UDP-alpha-D-glucose = alpha-D-glucosyl-L-tyrosyl-[glycogenin] + UDP + H(+). It catalyses the reaction [1,4-alpha-D-glucosyl](n)-L-tyrosyl-[glycogenin] + UDP-alpha-D-glucose = [1,4-alpha-D-glucosyl](n+1)-L-tyrosyl-[glycogenin] + UDP + H(+). Self-glucosylating initiator of glycogen synthesis. It catalyzes the formation of a short alpha (1,4)-glucosyl chain covalently attached via a glucose 1-O-tyrosyl linkage to internal tyrosine residues and these chains act as primers for the elongation reaction catalyzed by glycogen synthase. Capable of transferring glucosyl residues to unbound acceptors such as free oligoglucans or oligoglucan derivatives. This is Glycogenin-1 from Saccharomyces cerevisiae (strain ATCC 204508 / S288c) (Baker's yeast).